We begin with the raw amino-acid sequence, 106 residues long: uncharacterized protein (106 aa).

The protein resides in the mitochondrion. This is an uncharacterized protein from Arabidopsis thaliana (Mouse-ear cress).